The following is a 420-amino-acid chain: MATSLGSNTYNRQNWEDADFPILCQTCLGENPYIRMTKEKYGKECKICARPFTVFRWCPGVRMRFKKTEVCQTCSKLKNVCQTCLLDLEYGLPIQVRDAGLSFKDDMPKSDVNKEYYTQNMEREISNSDGTRPVGMLGKATSTSDMLLKLARTTPYYKRNRPHICSFWVKGECKRGEECPYRHEKPTDPDDPLADQNIKDRYYGINDPVADKLLKRASTMPRLDPPEDKTITTLYVGGLGDTITETDLRNHFYQFGEIRTITVVQRQQCAFIQFATRQAAEVAAEKSFNKLIVNGRRLNVKWGRSQAARGKEKEKDGTTDSGIKLEPVPGLPGALPPPPAAEEEASANYFNLPPSGPPAVVNIALPPPPGIAPPPPPGFGPHMFHPMGPPPPFMRAPGPIHYPSQDPQRMGAHAGKHSSP.

The residue at position 2 (Ala-2) is an N-acetylalanine. Phosphoserine is present on residues Ser-4 and Ser-102. Glycyl lysine isopeptide (Lys-Gly) (interchain with G-Cter in SUMO2) cross-links involve residues Lys-139 and Lys-149. The segment at 159-186 (RNRPHICSFWVKGECKRGEECPYRHEKP) adopts a C3H1-type zinc-finger fold. The residue at position 212 (Lys-212) is an N6-acetyllysine. In terms of domain architecture, RRM spans 232-305 (TTLYVGGLGD…RRLNVKWGRS (74 aa)). Residue Lys-290 forms a Glycyl lysine isopeptide (Lys-Gly) (interchain with G-Cter in SUMO2) linkage. Disordered regions lie at residues 303–343 (GRSQ…AAEE) and 372–420 (APPP…HSSP). The span at 309–318 (RGKEKEKDGT) shows a compositional bias: basic and acidic residues.

The protein belongs to the SLT11 family. Component of the pre-catalytic and catalytic spliceosome complexes. Component of the postcatalytic spliceosome P complex. Interacts with PDCD6; the interaction induces translocation of PDCD6 in the cytoplasm. Interacts with PPIL1.

It localises to the nucleus. The protein resides in the cytoplasm. In terms of biological role, required for pre-mRNA splicing as component of the activated spliceosome. Involved in the first step of pre-mRNA splicing. Binds directly to the internal stem-loop (ISL) domain of the U6 snRNA and to the pre-mRNA intron near the 5' splice site during the activation and catalytic phases of the spliceosome cycle. Involved in both translocations of the nuclear SLU7 to the cytoplasm and the cytosolic calcium-binding protein PDCD6 to the nucleus upon cellular stress responses. The polypeptide is Pre-mRNA-splicing factor RBM22 (RBM22) (Homo sapiens (Human)).